Consider the following 240-residue polypeptide: Ubiquinone biosynthesis O-methyltransferase (240 aa).

4 residues coordinate S-adenosyl-L-methionine: Arg44, Gly64, Asp85, and Met129.

Belongs to the methyltransferase superfamily. UbiG/COQ3 family.

The enzyme catalyses a 3-demethylubiquinol + S-adenosyl-L-methionine = a ubiquinol + S-adenosyl-L-homocysteine + H(+). It carries out the reaction a 3-(all-trans-polyprenyl)benzene-1,2-diol + S-adenosyl-L-methionine = a 2-methoxy-6-(all-trans-polyprenyl)phenol + S-adenosyl-L-homocysteine + H(+). The protein operates within cofactor biosynthesis; ubiquinone biosynthesis. O-methyltransferase that catalyzes the 2 O-methylation steps in the ubiquinone biosynthetic pathway. This is Ubiquinone biosynthesis O-methyltransferase from Escherichia coli O9:H4 (strain HS).